Consider the following 543-residue polypeptide: uncharacterized protein (543 aa).

The TRAM domain maps to 1–59 (MLKKNDIVEVEIVDLTHEGAGVAKVDGLVFFVENALPSEKILMRVLKVNKKIGFGKVEK). S-adenosyl-L-methionine-binding residues include glutamine 283, tyrosine 312, glutamate 333, and aspartate 381. The Nucleophile role is filled by cysteine 408.

It belongs to the class I-like SAM-binding methyltransferase superfamily. RNA M5U methyltransferase family.

This is an uncharacterized protein from Streptococcus pneumoniae (strain ATCC BAA-255 / R6).